A 224-amino-acid chain; its full sequence is MDKKLSIAIDGPAAAGKSTVAKIVAEKKSYVYIDTGAMYRAITYTALKQNADLTDEAALTELLKRTEIELVSVPEGQIVLVNGEDVTEEIRKDEVSNQVSIAAKHKGVREEMVKRQQQLGQKGGVVMDGRDIGTHVLPDAEVKIFLLASVEERAKRRYEENKKKGYDVNYETLIEEIARRDKLDSEREVSPLRKAEDAIEIDTTSLSIAEVAGKILEIVEQKSR.

11–19 (GPAAAGKST) contributes to the ATP binding site.

The protein belongs to the cytidylate kinase family. Type 1 subfamily.

The protein resides in the cytoplasm. It carries out the reaction CMP + ATP = CDP + ADP. The enzyme catalyses dCMP + ATP = dCDP + ADP. This Bacillus velezensis (strain DSM 23117 / BGSC 10A6 / LMG 26770 / FZB42) (Bacillus amyloliquefaciens subsp. plantarum) protein is Cytidylate kinase.